A 67-amino-acid chain; its full sequence is Large ribosomal subunit protein bL35 (67 aa).

It belongs to the bacterial ribosomal protein bL35 family.

The protein is Large ribosomal subunit protein bL35 of Leptospira borgpetersenii serovar Hardjo-bovis (strain JB197).